Consider the following 367-residue polypeptide: tRNA (cytosine(34)-C(5))-methyltransferase, mitochondrial (367 aa).

S-adenosyl-L-methionine-binding positions include 170–176, Glu193, Asp224, and Asp242; that span reads CAAPGGK. Cys296 functions as the Nucleophile in the catalytic mechanism.

The protein belongs to the class I-like SAM-binding methyltransferase superfamily. RsmB/NOP family.

The protein localises to the mitochondrion matrix. It catalyses the reaction cytidine(34) in mitochondrial tRNA + S-adenosyl-L-methionine = 5-methylcytidine(34) in mitochondrial tRNA + S-adenosyl-L-homocysteine + H(+). Mitochondrial tRNA methyltransferase that mediates methylation of cytosine to 5-methylcytosine (m5C) at position 34 of mt-tRNA(Met). mt-tRNA(Met) methylation at cytosine(34) takes place at the wobble position of the anticodon and initiates the formation of 5-formylcytosine (f(5)c) at this position. mt-tRNA(Met) containing the f(5)c modification at the wobble position enables recognition of the AUA codon in addition to the AUG codon, expanding codon recognition in mitochondrial translation. The chain is tRNA (cytosine(34)-C(5))-methyltransferase, mitochondrial from Danio rerio (Zebrafish).